Reading from the N-terminus, the 384-residue chain is Spermidine/putrescine import ATP-binding protein PotA (384 aa).

The region spanning 6–238 (ITFNNVSKTF…PINHFVANFI (233 aa)) is the ABC transporter domain. 40–47 (GASGSGKS) provides a ligand contact to ATP.

It belongs to the ABC transporter superfamily. Spermidine/putrescine importer (TC 3.A.1.11.1) family. In terms of assembly, the complex is composed of two ATP-binding proteins (PotA), two transmembrane proteins (PotB and PotC) and a solute-binding protein (PotD).

Its subcellular location is the cell membrane. It carries out the reaction ATP + H2O + polyamine-[polyamine-binding protein]Side 1 = ADP + phosphate + polyamineSide 2 + [polyamine-binding protein]Side 1.. In terms of biological role, part of the ABC transporter complex PotABCD involved in spermidine/putrescine import. Responsible for energy coupling to the transport system. The sequence is that of Spermidine/putrescine import ATP-binding protein PotA from Streptococcus pyogenes serotype M6 (strain ATCC BAA-946 / MGAS10394).